The primary structure comprises 195 residues: U8 snoRNA-decapping enzyme (195 aa).

One can recognise a Nudix hydrolase domain in the interval 18–173; sequence GWRHACHALL…IGSAREQLLE (156 aa). Residues His24, Arg50, and Phe57 each contribute to the substrate site. 4 residues coordinate Mn(2+): Gly59, Glu76, Glu80, and His99. Positions 61–82 match the Nudix box motif; that stretch reads FVDTQDRSLEDGLNRELREELG. A substrate-binding site is contributed by Gln170. Position 173 (Glu173) interacts with Mn(2+).

Belongs to the Nudix hydrolase family. NUDT16 subfamily. Homodimer. Mg(2+) serves as cofactor. It depends on Mn(2+) as a cofactor. The cofactor is Co(2+). Expressed strongly in lung, kidney, adrenal gland, testis, heart and brain.

The protein localises to the nucleus. Its subcellular location is the nucleoplasm. The protein resides in the nucleolus. It is found in the cytoplasm. The enzyme catalyses a 5'-end (N(7)-methyl 5'-triphosphoguanosine)-ribonucleoside in mRNA + H2O = N(7)-methyl-GDP + a 5'-end phospho-ribonucleoside in mRNA + 2 H(+). It catalyses the reaction IDP + H2O = IMP + phosphate + H(+). The catalysed reaction is dIDP + H2O = dIMP + phosphate + H(+). It carries out the reaction a 5'-end NAD(+)-phospho-ribonucleoside in mRNA + H2O = a 5'-end phospho-adenosine-phospho-ribonucleoside in mRNA + beta-nicotinamide D-ribonucleotide + 2 H(+). The enzyme catalyses a 5'-end FAD-phospho-ribonucleoside in mRNA + H2O = a 5'-end phospho-adenosine-phospho-ribonucleoside in mRNA + FMN + 2 H(+). It catalyses the reaction a 5'-end CoA-ribonucleoside in mRNA + H2O = a 5'-end phospho-adenosine-phospho-ribonucleoside in mRNA + (R)-4'-phosphopantetheine + 2 H(+). With respect to regulation, the phosphatase activity is inhibited by the product IMP. RNA-binding and decapping enzyme that catalyzes the cleavage of the cap structure of snoRNAs and mRNAs in a metal-dependent manner. Part of the U8 snoRNP complex that is required for the accumulation of mature 5.8S and 28S rRNA. Has diphosphatase activity and removes m7G and/or m227G caps from U8 snoRNA and leaves a 5'monophosphate on the RNA. Also catalyzes the cleavage of the cap structure on mRNAs. Does not hydrolyze cap analog structures like 7-methylguanosine nucleoside triphosphate (m7GpppG). Also hydrolysis m7G- and m227G U3-capped RNAs but with less efficiencies. Has broad substrate specificity with manganese or cobalt as cofactor and can act on various RNA species. Binds to the U8 snoRNA; metal is not required for RNA-binding. May play a role in the regulation of snoRNAs and mRNAs degradation. Also acts as a phosphatase; hydrolyzes the non-canonical purine nucleotides inosine diphosphate (IDP) and deoxyinosine diphosphate (dITP) as well as guanosine diphosphate (GDP), deoxyguanosine diphosphate (dGDP), xanthine diphosphate (XDP), inosine triphosphate (ITP) and deoxyinosine triphosphate (ITP) to their respective monophosphate derivatives and does not distinguish between the deoxy- and ribose forms. The order of activity with different substrates is IDP &gt; dIDP &gt;&gt; GDP = dGDP &gt; XDP = ITP = dITP. Binds strongly to GTP, ITP and XTP. Participates in the hydrolysis of dIDP/IDP and probably excludes non-canonical purines from RNA and DNA precursor pools, thus preventing their incorporation into RNA and DNA and avoiding chromosomal lesions. Exhibits decapping activity towards NAD-capped RNAs and FAD-capped RNAs. Exhibits decapping activity towards dpCoA-capped RNAs in vitro. The protein is U8 snoRNA-decapping enzyme (NUDT16) of Homo sapiens (Human).